Consider the following 481-residue polypeptide: 3-isopropylmalate dehydratase large subunit (481 aa).

Residues C357, C417, and C420 each contribute to the [4Fe-4S] cluster site.

The protein belongs to the aconitase/IPM isomerase family. LeuC type 1 subfamily. In terms of assembly, heterodimer of LeuC and LeuD. The cofactor is [4Fe-4S] cluster.

The catalysed reaction is (2R,3S)-3-isopropylmalate = (2S)-2-isopropylmalate. It functions in the pathway amino-acid biosynthesis; L-leucine biosynthesis; L-leucine from 3-methyl-2-oxobutanoate: step 2/4. In terms of biological role, catalyzes the isomerization between 2-isopropylmalate and 3-isopropylmalate, via the formation of 2-isopropylmaleate. The sequence is that of 3-isopropylmalate dehydratase large subunit from Mycolicibacterium vanbaalenii (strain DSM 7251 / JCM 13017 / BCRC 16820 / KCTC 9966 / NRRL B-24157 / PYR-1) (Mycobacterium vanbaalenii).